A 370-amino-acid chain; its full sequence is Uroporphyrinogen decarboxylase (370 aa).

Residues Arg-29–Arg-33, Asp-79, Tyr-155, Ser-210, and His-342 each bind substrate.

The protein belongs to the uroporphyrinogen decarboxylase family. As to quaternary structure, homodimer.

Its subcellular location is the cytoplasm. It carries out the reaction uroporphyrinogen III + 4 H(+) = coproporphyrinogen III + 4 CO2. The protein operates within porphyrin-containing compound metabolism; protoporphyrin-IX biosynthesis; coproporphyrinogen-III from 5-aminolevulinate: step 4/4. Its function is as follows. Catalyzes the decarboxylation of four acetate groups of uroporphyrinogen-III to yield coproporphyrinogen-III. This Variovorax paradoxus (strain S110) protein is Uroporphyrinogen decarboxylase.